A 210-amino-acid polypeptide reads, in one-letter code: MASYTIVYFPVQGRCEAMRMLLADQDQSWKEEVVAMQSWLQGPLKASCLYGQLPKFQDGDLTLYQSNAILRHLGRTLGLYGKDQREAALVDMVNDGVEDLRCKYVSLIYTNYQAGKEDYVKALPQHLKPFETLLSQNKGGQAFIVGDQISFADYNLLDLLRIHQVLAPSCLDSFPLLSAYVARLNSRPKLKAFLASPEHVNRPINGNGKQ.

The 80-residue stretch at 2 to 81 folds into the GST N-terminal domain; it reads ASYTIVYFPV…HLGRTLGLYG (80 aa). At Tyr-4 the chain carries Phosphotyrosine; by EGFR. Glutathione-binding positions include Tyr-8, Arg-14, Trp-39, Lys-45, and 52–53; that span reads QL. Thr-62 carries the post-translational modification Phosphothreonine. Glutathione is bound at residue 65–66; sequence QS. The 122-residue stretch at 83-204 folds into the GST C-terminal domain; sequence DQREAALVDM…ASPEHVNRPI (122 aa). Residues Lys-103 and Lys-116 each carry the N6-succinyllysine modification. Lys-128 bears the N6-acetyllysine mark.

This sequence belongs to the GST superfamily. Pi family. Homodimer. Interacts with CDK5.

Its subcellular location is the cytoplasm. It is found in the mitochondrion. The protein localises to the nucleus. It catalyses the reaction RX + glutathione = an S-substituted glutathione + a halide anion + H(+). The enzyme catalyses prostaglandin J2 + glutathione = prostaglandin J2-S-(R)-glutathione. It carries out the reaction prostaglandin J2 + glutathione = prostaglandin J2-S-(S)-glutathione. The catalysed reaction is prostaglandin A2 + glutathione = prostaglandin A2-S-(S)-glutathione. It catalyses the reaction 11(S)-hydroxy-14(S),15(S)-epoxy-(5Z,8Z,12E)-eicosatrienoate + glutathione = (11S,15S)-dihydroxy-14(R)-S-glutathionyl-(5Z,8Z,12E)-eicosatrienoate. Functionally, conjugation of reduced glutathione to a wide number of exogenous and endogenous hydrophobic electrophiles. Involved in the formation of glutathione conjugates of both prostaglandin A2 (PGA2) and prostaglandin J2 (PGJ2). Participates in the formation of novel hepoxilin regioisomers. Negatively regulates CDK5 activity via p25/p35 translocation to prevent neurodegeneration. The sequence is that of Glutathione S-transferase P (GSTP1) from Capra hircus (Goat).